Here is a 132-residue protein sequence, read N- to C-terminus: Probable prefoldin subunit 4 (132 aa).

This sequence belongs to the prefoldin subunit beta family. Heterohexamer of two PFD-alpha type and four PFD-beta type subunits.

Its function is as follows. Binds specifically to cytosolic chaperonin (c-CPN) and transfers target proteins to it. Binds to nascent polypeptide chain and promotes folding in an environment in which there are many competing pathways for nonnative proteins. The sequence is that of Probable prefoldin subunit 4 (pfdn4) from Dictyostelium discoideum (Social amoeba).